Here is a 70-residue protein sequence, read N- to C-terminus: Large ribosomal subunit protein bL31 (70 aa).

Zn(2+) contacts are provided by cysteine 16, cysteine 18, cysteine 37, and cysteine 40.

Belongs to the bacterial ribosomal protein bL31 family. Type A subfamily. Part of the 50S ribosomal subunit. Zn(2+) is required as a cofactor.

Functionally, binds the 23S rRNA. This is Large ribosomal subunit protein bL31 from Haemophilus ducreyi (strain 35000HP / ATCC 700724).